A 126-amino-acid polypeptide reads, in one-letter code: Glycine cleavage system H protein (126 aa).

The 83-residue stretch at 22–104 (IAYVGITDYA…YGKGWLIKIK (83 aa)) folds into the Lipoyl-binding domain. At K63 the chain carries N6-lipoyllysine.

The protein belongs to the GcvH family. As to quaternary structure, the glycine cleavage system is composed of four proteins: P, T, L and H. The cofactor is (R)-lipoate.

Functionally, the glycine cleavage system catalyzes the degradation of glycine. The H protein shuttles the methylamine group of glycine from the P protein to the T protein. The sequence is that of Glycine cleavage system H protein from Phocaeicola vulgatus (strain ATCC 8482 / DSM 1447 / JCM 5826 / CCUG 4940 / NBRC 14291 / NCTC 11154) (Bacteroides vulgatus).